Consider the following 661-residue polypeptide: PAN2-PAN3 deadenylation complex subunit PAN3 (661 aa).

Disordered stretches follow at residues 1–26 (MASAGKPALDDSRRGTGSPKIKAREN) and 53–130 (DPHK…LRQD). The segment at 26 to 55 (NAKDTLCRNITIYGRCRYEDKGCAFNHDPH) adopts a C3H1-type zinc-finger fold. The segment covering 75-102 (SFTPSLLSSNGSSPTSTPATTKKMTTIS) has biased composition (low complexity). Residues 115–130 (SVVSRSNASTPGLRQD) show a composition bias toward polar residues. A pseudokinase domain region spans residues 263-524 (QTLPNTQLPA…NIDIFITGIS (262 aa)). Residues Arg-315, 364 to 371 (DYHPLSKT), and 424 to 425 (SK) each bind ATP. Residues 525–563 (SQLMSTFDSALHLDDQLTSDLSRELENGRLVRLMTKLNF) adopt a coiled-coil conformation. The interval 564–661 (VNERPEYEHD…ALMKPARRMH (98 aa)) is knob domain.

This sequence belongs to the protein kinase superfamily. PAN3 family. Homodimer. Forms a heterotrimer with a catalytic subunit pan2 to form the poly(A)-nuclease (PAN) deadenylation complex. Interacts (via PAM-2 motif) with poly(A)-binding protein pab1 (via PABC domain), conferring substrate specificity of the enzyme complex.

The protein localises to the cytoplasm. Functionally, regulatory subunit of the poly(A)-nuclease (PAN) deadenylation complex, one of two cytoplasmic mRNA deadenylases involved in mRNA turnover. PAN specifically shortens poly(A) tails of RNA and the activity is stimulated by poly(A)-binding protein pab1. PAN deadenylation is followed by rapid degradation of the shortened mRNA tails by the CCR4-NOT complex. Deadenylated mRNAs are then degraded by two alternative mechanisms, namely exosome-mediated 3'-5' exonucleolytic degradation, or deadenylation-dependent mRNA decaping and subsequent 5'-3' exonucleolytic degradation by xrn1. May also be involved in post-transcriptional maturation of mRNA poly(A) tails. pan3 acts as a positive regulator for PAN activity, recruiting the catalytic subunit pan2 to mRNA via its interaction with RNA and with pab1. The polypeptide is PAN2-PAN3 deadenylation complex subunit PAN3 (Neosartorya fischeri (strain ATCC 1020 / DSM 3700 / CBS 544.65 / FGSC A1164 / JCM 1740 / NRRL 181 / WB 181) (Aspergillus fischerianus)).